The chain runs to 225 residues: Holliday junction branch migration complex subunit RuvA (225 aa).

Positions methionine 1–serine 71 are domain I. The tract at residues serine 72 to serine 150 is domain II. The tract at residues lysine 151–isoleucine 161 is flexible linker. The domain III stretch occupies residues isoleucine 161–arginine 225.

It belongs to the RuvA family. In terms of assembly, homotetramer. Forms an RuvA(8)-RuvB(12)-Holliday junction (HJ) complex. HJ DNA is sandwiched between 2 RuvA tetramers; dsDNA enters through RuvA and exits via RuvB. An RuvB hexamer assembles on each DNA strand where it exits the tetramer. Each RuvB hexamer is contacted by two RuvA subunits (via domain III) on 2 adjacent RuvB subunits; this complex drives branch migration. In the full resolvosome a probable DNA-RuvA(4)-RuvB(12)-RuvC(2) complex forms which resolves the HJ.

The protein localises to the cytoplasm. In terms of biological role, the RuvA-RuvB-RuvC complex processes Holliday junction (HJ) DNA during genetic recombination and DNA repair, while the RuvA-RuvB complex plays an important role in the rescue of blocked DNA replication forks via replication fork reversal (RFR). RuvA specifically binds to HJ cruciform DNA, conferring on it an open structure. The RuvB hexamer acts as an ATP-dependent pump, pulling dsDNA into and through the RuvAB complex. HJ branch migration allows RuvC to scan DNA until it finds its consensus sequence, where it cleaves and resolves the cruciform DNA. In Prochlorococcus marinus (strain MIT 9312), this protein is Holliday junction branch migration complex subunit RuvA.